Consider the following 349-residue polypeptide: Alanine racemase (349 aa).

The active-site Proton acceptor; specific for D-alanine is lysine 35. The residue at position 35 (lysine 35) is an N6-(pyridoxal phosphate)lysine. Residue arginine 130 participates in substrate binding. The active-site Proton acceptor; specific for L-alanine is tyrosine 244. Methionine 292 is a binding site for substrate.

This sequence belongs to the alanine racemase family. Requires pyridoxal 5'-phosphate as cofactor.

It catalyses the reaction L-alanine = D-alanine. The protein operates within amino-acid biosynthesis; D-alanine biosynthesis; D-alanine from L-alanine: step 1/1. In terms of biological role, catalyzes the interconversion of L-alanine and D-alanine. May also act on other amino acids. This is Alanine racemase (alr) from Cereibacter sphaeroides (strain ATCC 17023 / DSM 158 / JCM 6121 / CCUG 31486 / LMG 2827 / NBRC 12203 / NCIMB 8253 / ATH 2.4.1.) (Rhodobacter sphaeroides).